The primary structure comprises 246 residues: 3'(2'),5'-bisphosphate nucleotidase CysQ (246 aa).

Residues glutamate 64, aspartate 83, leucine 85, aspartate 86, and aspartate 205 each coordinate Mg(2+). Substrate is bound at residue glutamate 64. Residues 85–88 and aspartate 205 contribute to the substrate site; that span reads LDGT.

Belongs to the inositol monophosphatase superfamily. CysQ family. Mg(2+) is required as a cofactor.

It is found in the cell inner membrane. It carries out the reaction adenosine 3',5'-bisphosphate + H2O = AMP + phosphate. Inhibited by lithium and calcium. In terms of biological role, converts adenosine-3',5'-bisphosphate (PAP) to AMP. May also convert adenosine 3'-phosphate 5'-phosphosulfate (PAPS) to adenosine 5'-phosphosulfate (APS). Has 10000-fold lower activity towards inositol 1,4-bisphosphate (Ins(1,4)P2). The chain is 3'(2'),5'-bisphosphate nucleotidase CysQ from Escherichia coli (strain K12).